Here is a 208-residue protein sequence, read N- to C-terminus: MNYTEFFTNRSTSEISKDLLGRTLSYNNGEEILSGTIVEAEAYVGVKDRAAHSYGGRRSPANEGLYRPGGSLYIYSQRQYFFFDVSCQEEGEPQGVLIRAIDPLTGIDTMIKNRSGKTGPLLTNGPGKMMQALGITSRKWDLVDLNDSPFDIDIDHKREIEEIVALPRVGINQSDPEWAQKKLRFIVSGNPYVSDIKKKDIKKNHGFI.

This sequence belongs to the DNA glycosylase MPG family.

This is Putative 3-methyladenine DNA glycosylase from Lactobacillus johnsonii (strain CNCM I-12250 / La1 / NCC 533).